The chain runs to 21 residues: Fibrinogen beta chain (21 aa).

Gln-1 carries the pyrrolidone carboxylic acid modification. Tyr-6 is subject to Sulfotyrosine.

As to quaternary structure, heterohexamer; disulfide linked. Contains 2 sets of 3 non-identical chains (alpha, beta and gamma). The 2 heterotrimers are in head to head conformation with the N-termini in a small central domain. Conversion of fibrinogen to fibrin is triggered by thrombin, which cleaves fibrinopeptides A and B from alpha and beta chains, and thus exposes the N-terminal polymerization sites responsible for the formation of the soft clot.

The protein localises to the secreted. Cleaved by the protease thrombin to yield monomers which, together with fibrinogen alpha (FGA) and fibrinogen gamma (FGG), polymerize to form an insoluble fibrin matrix. Fibrin has a major function in hemostasis as one of the primary components of blood clots. In addition, functions during the early stages of wound repair to stabilize the lesion and guide cell migration during re-epithelialization. Was originally thought to be essential for platelet aggregation, based on in vitro studies using anticoagulated blood. However subsequent studies have shown that it is not absolutely required for thrombus formation in vivo. Enhances expression of SELP in activated platelets. Maternal fibrinogen is essential for successful pregnancy. Fibrin deposition is also associated with infection, where it protects against IFNG-mediated hemorrhage. May also facilitate the antibacterial immune response via both innate and T-cell mediated pathways. The polypeptide is Fibrinogen beta chain (FGB) (Odocoileus hemionus (Mule deer)).